Reading from the N-terminus, the 550-residue chain is Calcium-dependent protein kinase 20 (550 aa).

The segment at 1 to 58 (MGNCCVTPEGSGRGRKKQQQEQKQKQKEPKQQQQQQKKGKKPNPFSIEYNRSSAPSGH) is disordered. A lipid anchor (N-myristoyl glycine) is attached at G2. Positions 18–30 (QQQEQKQKQKEPK) are enriched in basic and acidic residues. Residues 75–333 (YELGGELGRG…AQQVLDHPWL (259 aa)) form the Protein kinase domain. Residues 81–89 (LGRGEFGVT) and K104 contribute to the ATP site. The active-site Proton acceptor is D199. The tract at residues 339 to 369 (APNVNLGETVKARLQQFSVMNKFKKHALRVI) is autoinhibitory domain. 4 consecutive EF-hand domains span residues 376–411 (EEVAGIKDMFEKMDLNKDNMINFDELKLGLHKLGHQ), 412–447 (MADADVQILMDAADVDGNGSLDYGEFVALSVHLRKI), 448–483 (GNDEHLHKAFAYFDRNQSGYIEIDELRESLADDLGA), and 484–519 (NHEEVINAIIRDVDTDKDGKISYDEFAAMMKAGTDW). Ca(2+)-binding residues include D389, N391, D393, M395, E400, D425, D427, N429, S431, E436, D461, N463, S465, Y467, E472, D497, D499, D501, K503, and E508.

The protein belongs to the protein kinase superfamily. Ser/Thr protein kinase family. CDPK subfamily. In terms of tissue distribution, expressed in roots and leaf blades.

The protein localises to the membrane. It carries out the reaction L-seryl-[protein] + ATP = O-phospho-L-seryl-[protein] + ADP + H(+). It catalyses the reaction L-threonyl-[protein] + ATP = O-phospho-L-threonyl-[protein] + ADP + H(+). With respect to regulation, activated by calcium. Autophosphorylation may play an important role in the regulation of the kinase activity. Its function is as follows. May play a role in signal transduction pathways that involve calcium as a second messenger. This chain is Calcium-dependent protein kinase 20, found in Oryza sativa subsp. japonica (Rice).